We begin with the raw amino-acid sequence, 883 residues long: MVTKTIKSLNLEINFEVEDVPYEEEILRNAYSVKHWLRYIDHKAKAPNNGVNMVYERALKELPGSYKIWHNYLRTRRKQVRGKIPTDPMYEEVNSAFERALVFMHKMPRIWMDYGAFMTSQCKITRTRHVFDRALRALPITQHGRIWPLYLQFVRRFEMPETALRVYRRYLKLFPEDTEEYVDYLQEADRLDEAAQQLAHIVDNEHFVSKHGKSNHQLWNELCDLISKNPHKVHSLNVDAIIRGGLRRYTDQLGHLWNSLADYYVRSGLFDRARDIYEEAIQTVTTVRDFTQVFDEYAQFEELSLNRRMEQVAANEAATEEDDIDVELRLSRFEYLMERRLLLLNSVLLRQNPHNVHEWHKRVTLYEDKPAEIISTYTEAVQTVQPKQAVGKLHTLWVEFAKFYEANGQVEDARVVFERGTEVEYVKVEDLAAVWCEWAEMELRQQQFEAALKLMQRATAMPKRKIAYYDDTETVQARLHRSLKVWSMYADLEESFGTFKTCKAVYERIIDLKICTPQIIINYGMFLEEHNYFEEAYRAYEKGISLFKWPNVYDIWNSYLTKFLERYGGTKLERARDLFEQCLDQCPPEHAKYFYLLYAKLEEEHGLARHAMSVYDRATSAVKEDEMFDMYNIFIKKAAEIYGLPRTREIYEKAIESLPEQNMRHMCVKFAELETKLGEVDRARAIYAHCSQVCDPRITADFWQTWKEFEVRHGNEDTMREMLRIKRSVQATYNTQVNMMAAQFLSTNNGAAADAGAGAGPDAMRLLEEKARQAAAESKQKPIEKAASNIMFVRGETQGGAKDKKDTVVNPDEIDIGDSDEDDEEEDDDEENEMTNENQASAAVTKTDEEGLVMKKLRFEQKAIPAKVFGSLKPSNQGDSDGE.

12 HAT repeats span residues 13–45 (INFE…HKAK), 46–78 (APNN…TRRK), 88–120 (PMYE…FMTS), 122–156 (CKIT…FVRR), 158–190 (EMPE…EADR), 268–303 (GLFD…FEEL), 368–406 (DKPA…FYEA), 463–495 (KRKI…LEES), 531–565 (NYFE…KFLE), 570–604 (TKLE…LEEE), 642–676 (YGLP…LETK), and 678–712 (GEVD…FEVR). Disordered regions lie at residues 794–851 (RGET…DEEG) and 864–883 (IPAK…SDGE). Positions 812–834 (DEIDIGDSDEDDEEEDDDEENEM) are enriched in acidic residues. Composition is skewed to polar residues over residues 835 to 844 (TNENQASAAV) and 873 to 883 (KPSNQGDSDGE).

Belongs to the crooked-neck family. As to quaternary structure, component of the NTC(Nineteen)/Prp19 complex composed of at least fand, Prp19,CG9667/ISY1 and Cdc5/CDC5L. Within the complex, interacts with Prp19 and ISY1/CG9667.

Its subcellular location is the nucleus. In terms of biological role, subunit of the NTC(Nineteen)/Prp19 complex, which is part of the spliceosome. The complex participates in spliceosome assembly, its remodeling and is required for efficient spliceosome activation. Essential for efficient pre-mRNA splicing. In embryos, efficient pre-mRNA splicing of zygotic transcripts is essential during dynamic cellular processes that require rapid division and/or dramatic changes in gene expression such as blastoderm cellularization, tracheal branching morphogenesis, Malpighian morphogenesis and epidermal development. Part of its role in promoting embryo tracheal development is also due to specifically splicing bnl transcripts which results in the activation of the BNL-FGF pathway. The polypeptide is Pre-mRNA-splicing factor syf1 homolog (Drosophila melanogaster (Fruit fly)).